We begin with the raw amino-acid sequence, 119 residues long: Phosphoribosyl-AMP cyclohydrolase (119 aa).

Position 77 (Asp77) interacts with Mg(2+). Cys78 contacts Zn(2+). 2 residues coordinate Mg(2+): Asp79 and Asp81. Residues Cys94 and Cys101 each contribute to the Zn(2+) site.

This sequence belongs to the PRA-CH family. As to quaternary structure, homodimer. It depends on Mg(2+) as a cofactor. Zn(2+) serves as cofactor.

The protein localises to the cytoplasm. It carries out the reaction 1-(5-phospho-beta-D-ribosyl)-5'-AMP + H2O = 1-(5-phospho-beta-D-ribosyl)-5-[(5-phospho-beta-D-ribosylamino)methylideneamino]imidazole-4-carboxamide. The protein operates within amino-acid biosynthesis; L-histidine biosynthesis; L-histidine from 5-phospho-alpha-D-ribose 1-diphosphate: step 3/9. Functionally, catalyzes the hydrolysis of the adenine ring of phosphoribosyl-AMP. In Dinoroseobacter shibae (strain DSM 16493 / NCIMB 14021 / DFL 12), this protein is Phosphoribosyl-AMP cyclohydrolase.